The primary structure comprises 963 residues: uncharacterized protein (963 aa).

Coiled-coil stretches lie at residues Asn176–Met236 and Asp373–Val467. A helical membrane pass occupies residues Ile468 to Ile488. 2 coiled-coil regions span residues Arg536–Ala570 and Ala647–Ser789.

The protein localises to the cell membrane. This is an uncharacterized protein from Bacillus subtilis (strain 168).